Here is a 228-residue protein sequence, read N- to C-terminus: uncharacterized protein (228 aa).

4 helical membrane-spanning segments follow: residues 37–54 (WCMH…TLIV), 67–89 (VVSI…STGV), 104–126 (HIGI…TSRL), and 138–160 (VLHV…LVLY).

Its subcellular location is the cell membrane. This is an uncharacterized protein from Treponema pallidum (strain Nichols).